Here is an 817-residue protein sequence, read N- to C-terminus: Probable beta-glucosidase G (817 aa).

The first 20 residues, 1-20, serve as a signal peptide directing secretion; sequence MANIAHLIVSGLLAATVAHG. 4 N-linked (GlcNAc...) asparagine glycosylation sites follow: asparagine 40, asparagine 58, asparagine 229, and asparagine 276. The active site involves aspartate 304. N-linked (GlcNAc...) asparagine glycosylation is found at asparagine 343, asparagine 350, asparagine 402, asparagine 507, asparagine 563, asparagine 584, asparagine 623, asparagine 662, asparagine 679, and asparagine 715.

Belongs to the glycosyl hydrolase 3 family.

It is found in the secreted. The enzyme catalyses Hydrolysis of terminal, non-reducing beta-D-glucosyl residues with release of beta-D-glucose.. Its pathway is glycan metabolism; cellulose degradation. Functionally, beta-glucosidases are one of a number of cellulolytic enzymes involved in the degradation of cellulosic biomass. Catalyzes the last step releasing glucose from the inhibitory cellobiose. This Aspergillus terreus (strain NIH 2624 / FGSC A1156) protein is Probable beta-glucosidase G (bglG).